The primary structure comprises 213 residues: Imidazole glycerol phosphate synthase subunit HisH (213 aa).

The region spanning 8 to 213 (TVALIDYGAG…FLSRFLDWNP (206 aa)) is the Glutamine amidotransferase type-1 domain. Cysteine 91 acts as the Nucleophile in catalysis. Catalysis depends on residues histidine 193 and glutamate 195.

In terms of assembly, heterodimer of HisH and HisF.

Its subcellular location is the cytoplasm. The enzyme catalyses 5-[(5-phospho-1-deoxy-D-ribulos-1-ylimino)methylamino]-1-(5-phospho-beta-D-ribosyl)imidazole-4-carboxamide + L-glutamine = D-erythro-1-(imidazol-4-yl)glycerol 3-phosphate + 5-amino-1-(5-phospho-beta-D-ribosyl)imidazole-4-carboxamide + L-glutamate + H(+). It carries out the reaction L-glutamine + H2O = L-glutamate + NH4(+). Its pathway is amino-acid biosynthesis; L-histidine biosynthesis; L-histidine from 5-phospho-alpha-D-ribose 1-diphosphate: step 5/9. Its function is as follows. IGPS catalyzes the conversion of PRFAR and glutamine to IGP, AICAR and glutamate. The HisH subunit catalyzes the hydrolysis of glutamine to glutamate and ammonia as part of the synthesis of IGP and AICAR. The resulting ammonia molecule is channeled to the active site of HisF. The chain is Imidazole glycerol phosphate synthase subunit HisH from Zymomonas mobilis subsp. mobilis (strain ATCC 31821 / ZM4 / CP4).